The primary structure comprises 188 residues: Elongation factor P (188 aa).

Belongs to the elongation factor P family.

The protein localises to the cytoplasm. Its pathway is protein biosynthesis; polypeptide chain elongation. In terms of biological role, involved in peptide bond synthesis. Stimulates efficient translation and peptide-bond synthesis on native or reconstituted 70S ribosomes in vitro. Probably functions indirectly by altering the affinity of the ribosome for aminoacyl-tRNA, thus increasing their reactivity as acceptors for peptidyl transferase. The chain is Elongation factor P from Cereibacter sphaeroides (strain KD131 / KCTC 12085) (Rhodobacter sphaeroides).